Consider the following 38-residue polypeptide: Small ribosomal subunit protein eS32 (38 aa).

It belongs to the eukaryotic ribosomal protein eS32 family. In terms of assembly, component of the small ribosomal subunit (SSU).

The chain is Small ribosomal subunit protein eS32 (rpl41e) from Methanocaldococcus jannaschii (strain ATCC 43067 / DSM 2661 / JAL-1 / JCM 10045 / NBRC 100440) (Methanococcus jannaschii).